We begin with the raw amino-acid sequence, 258 residues long: Adenylate kinase (258 aa).

52-57 lines the ATP pocket; the sequence is GAGKGT. Positions 72 to 101 are NMP; sequence ATGDMLRSQVAKKTALGKEAKKIMDQGGLV. Residues T73, R78, 99 to 101, 128 to 131, and Q135 each bind AMP; these read GLV and GFPR. Positions 169-206 are LID; that stretch reads GRLVHPASGRSYHKIFNPPKEEMKDDVTGEPLIQRSDD. Residues R170 and 179–180 each bind ATP; that span reads SY. AMP-binding residues include R203 and R214. ATP is bound at residue Q242.

Belongs to the adenylate kinase family. AK2 subfamily. Monomer.

It is found in the cytoplasm. The protein localises to the cytosol. It localises to the mitochondrion intermembrane space. The enzyme catalyses AMP + ATP = 2 ADP. Catalyzes the reversible transfer of the terminal phosphate group between ATP and AMP. Plays an important role in cellular energy homeostasis and in adenine nucleotide metabolism. Adenylate kinase activity is critical for regulation of the phosphate utilization and the AMP de novo biosynthesis pathways. This chain is Adenylate kinase (adk1), found in Aspergillus niger (strain ATCC MYA-4892 / CBS 513.88 / FGSC A1513).